The chain runs to 339 residues: Delta(9)-fatty-acid desaturase fat-6 (339 aa).

4 helical membrane-spanning segments follow: residues 52–72 (VALF…LIFE), 77–97 (TVIF…AGAH), 195–215 (YFPL…VYFW), and 219–241 (AFIA…TWCI).

This sequence belongs to the fatty acid desaturase type 1 family. In terms of tissue distribution, expressed in the intestine in adult worms and in all four larval stages. Additional expression in the hypodermis in all life stages.

It is found in the membrane. It carries out the reaction octadecanoyl-CoA + 2 Fe(II)-[cytochrome b5] + O2 + 2 H(+) = (9Z)-octadecenoyl-CoA + 2 Fe(III)-[cytochrome b5] + 2 H2O. It catalyses the reaction hexadecanoyl-CoA + 2 Fe(II)-[cytochrome b5] + O2 + 2 H(+) = (9Z)-hexadecenoyl-CoA + 2 Fe(III)-[cytochrome b5] + 2 H2O. The catalysed reaction is heptadecanoyl-CoA + 2 Fe(II)-[cytochrome b5] + O2 + 2 H(+) = (9Z)-heptadecenoyl-CoA + 2 Fe(III)-[cytochrome b5] + 2 H2O. The enzyme catalyses (11E)-octadecenoyl-CoA + 2 Fe(II)-[cytochrome b5] + O2 + 2 H(+) = (9Z,11E)-octadecadienoyl-CoA + 2 Fe(III)-[cytochrome b5] + 2 H2O. It participates in lipid metabolism; monounsaturated fatty acid biosynthesis. The protein operates within lipid metabolism; fatty acid metabolism. Delta(9)-fatty acid desaturase that acts preferentially on stearoyl-CoA (octadecanoyl-CoA) producing the monounsaturated oleoyl-CoA ((9Z)-octadecenoyl-CoA), one of the most abundant monounsaturated fatty acid in Caenorhabditis elegans phospholipids and triacylglycerols. Also acts on palmitoyl-CoA (hexadecanoyl-CoA), heptadecanoyl-CoA and (11E)-octadecenoyl-CoA (trans-vaccenoyl-CoA), the monounsaturated fatty acids (MUFAs) produced are further used as substrates to synthesize polyunsaturated fatty acids (PUFAs) by several other desaturases and elongases. Unlike plants, Caenorhabditis elegans desaturases seem to use fatty acyl-CoAs as substrates. This Caenorhabditis elegans protein is Delta(9)-fatty-acid desaturase fat-6 (fat-6).